Consider the following 122-residue polypeptide: Bet1-like SNARE 1-1 (122 aa).

At 1–103 (MNPRREPRGG…VFETKSSRRM (103 aa)) the chain is on the cytoplasmic side. Positions 32–94 (EINEHENERA…SGTMDRFKTV (63 aa)) constitute a t-SNARE coiled-coil homology domain. Ser-56 carries the phosphoserine modification. Residues 104-121 (LTLVASFVGLFLVIYYLT) traverse the membrane as a helical; Anchor for type IV membrane protein segment. A topological domain (vesicular) is located at residue Arg-122.

Belongs to the BET1 family.

It is found in the golgi apparatus membrane. The protein resides in the endoplasmic reticulum membrane. Required for vesicular transport from the ER to the Golgi complex. Functions as a SNARE associated with ER-derived vesicles. The polypeptide is Bet1-like SNARE 1-1 (BET11) (Arabidopsis thaliana (Mouse-ear cress)).